A 459-amino-acid polypeptide reads, in one-letter code: MADVSQRTQQAVDTAMAGAAEMSRYGRRLLNMLWDPEPTNDRSLNRPVWCLGCSYTNEPTTVDRPDQDASSTVRATLPTTPSTTTLPYPLKAVPTTPPESSSSSFSSSLAYDELLEDAGWPIAFLDDFESRVWMTYRSEFEPISKSNDPRASAALSFAMRLRTLADQGGFSSDTGWGCMIRSGQSLLANTLVICQLGRDWRRGKAARQEREILARFADDPRAPYSLHNFVRHGAVACGKFPGEWFGPSATARCIQALANSNESSLRVYSTGDLPDVYEDSFMAVAKPDGETFHPTLILVGTRLGIDKINQVYWEALTATLQMPQSVGIAGGRPSASHYFIGAQRSGDAYEPGSYLFYLDPHCTRPALPFHEDVDQYTSDDINTCHTRRLRRLHVRDMDPSMLIGFLIKDEDDWDMWKDSVKYVQGKTIINVADHDPARGMPAEREAAIDEVETLKGEFV.

A compositionally biased stretch (low complexity) spans 77–90 (LPTTPSTTTLPYPL). Positions 77 to 104 (LPTTPSTTTLPYPLKAVPTTPPESSSSS) are disordered. Cys-178 serves as the catalytic Nucleophile. Residues Asp-359 and His-361 contribute to the active site.

Belongs to the peptidase C54 family.

Its subcellular location is the cytoplasm. The protein resides in the nucleus. It localises to the preautophagosomal structure. It carries out the reaction [protein]-C-terminal L-amino acid-glycyl-phosphatidylethanolamide + H2O = [protein]-C-terminal L-amino acid-glycine + a 1,2-diacyl-sn-glycero-3-phosphoethanolamine. Functionally, cysteine protease that plays a key role in cytoplasm to vacuole transport (Cvt) and autophagy by mediating both proteolytic activation and delipidation of ATG8. Required for selective autophagic degradation of the nucleus (nucleophagy) as well as for mitophagy which contributes to regulate mitochondrial quantity and quality by eliminating the mitochondria to a basal level to fulfill cellular energy requirements and preventing excess ROS production. The protease activity is required for proteolytic activation of ATG8: cleaves the C-terminal amino acid of ATG8 to reveal a C-terminal glycine. ATG8 ubiquitin-like activity requires the exposure of the glycine at the C-terminus for its conjugation to phosphatidylethanolamine (PE) and its insertion to membranes, which is necessary for autophagy. The ATG8-PE conjugate mediates tethering between adjacent membranes and stimulates membrane hemifusion, leading to expansion of the autophagosomal membrane during autophagy. In addition to the protease activity, also catalyzes deconjugation of PE-conjugated forms of ATG8 during macroautophagy: ATG8 delipidation is required to release the protein from membranes, which facilitates multiple events during macroautophagy, and especially for efficient autophagosome biogenesis, the assembly of ATG9-containing tubulovesicular clusters into phagophores/autophagosomes, and for the disassembly of PAS-associated ATG components. ATG8 delipidation by ATG4 also recycles ATG8-PE generated on inappropriate membranes to maintain a reservoir of unlipidated ATG8 that is required for autophagosome formation at the PAS. The sequence is that of Probable cysteine protease ATG4 (ATG4) from Cryphonectria parasitica (Chestnut blight fungus).